We begin with the raw amino-acid sequence, 647 residues long: Versicolorin B synthase (647 aa).

The first 26 residues, 1–26, serve as a signal peptide directing secretion; the sequence is MALSTILTAAAMPVAGLFAFAQQSSA. Residues 85–86 and 106–107 each bind FAD; these read TA and EA. Residue Asn-117 is glycosylated (N-linked (GlcNAc...) asparagine). FAD is bound at residue 172 to 175; the sequence is GAML. Residues Asn-222 and Asn-509 are each glycosylated (N-linked (GlcNAc...) asparagine). FAD contacts are provided by residues Ala-617 and 628–629; that span reads PM.

This sequence belongs to the GMC oxidoreductase family. In terms of assembly, homodimer. It depends on FAD as a cofactor.

The protein localises to the cytoplasm. It localises to the cytosol. The catalysed reaction is (2S-3S)-versiconal hemiacetal = versicolorin B + H2O. It catalyses the reaction (S)-5'-oxoaverantin + H(+) = (1'S,5'S)-averufin + H2O. Its pathway is mycotoxin biosynthesis. Versicolorin B synthase; part of the fragmented gene cluster that mediates the biosynthesis of dothistromin (DOTH), a polyketide toxin very similar in structure to the aflatoxin precursor, versicolorin B. The first step of the pathway is the conversion of acetate to norsolorinic acid (NOR) and requires the fatty acid synthase subunits hexA and hexB, as well as the polyketide synthase pksA. PksA combines a hexanoyl starter unit and 7 malonyl-CoA extender units to synthesize the precursor NOR. The hexanoyl starter unit is provided to the acyl-carrier protein (ACP) domain by the fungal fatty acid synthase hexA/hexB. The second step is the conversion of NOR to averantin (AVN) and requires the norsolorinic acid ketoreductase nor1, which catalyzes the dehydration of norsolorinic acid to form (1'S)-averantin. The cytochrome P450 monooxygenase avnA then catalyzes the hydroxylation of AVN to 5'hydroxyaverantin (HAVN). The next step is performed by adhA that transforms HAVN to averufin (AVF). Averufin might then be converted to hydroxyversicolorone by cypX and avfA. Hydroxyversicolorone is further converted versiconal hemiacetal acetate (VHA) by moxY. VHA is then the substrate for the versiconal hemiacetal acetate esterase est1 to yield versiconal (VAL). Versicolorin B synthase vbsA then converts VAL to versicolorin B (VERB) by closing the bisfuran ring. Then, the activity of the versicolorin B desaturase verB leads to versicolorin A (VERA). DotB, a predicted chloroperoxidase, may perform epoxidation of the A-ring of VERA. Alternatively, a cytochrome P450, such as cypX or avnA could catalyze this step. It is also possible that another, uncharacterized, cytochrome P450 enzyme is responsible for this step. Opening of the epoxide could potentially be achieved by the epoxide hydrolase epoA. However, epoA seems not to be required for DOTH biosynthesis, but other epoxide hydrolases may have the ability to complement this hydrolysis. Alternatively, opening of the epoxide ring could be achieved non-enzymatically. The next step is the deoxygenation of ring A to yield the 5,8-dihydroxyanthraquinone which is most likely catalyzed by the NADPH dehydrogenase encoded by ver1. The last stages of DOTH biosynthesis are proposed to involve hydroxylation of the bisfuran. OrdB and norB might have oxidative roles here. An alternative possibility is that cytochrome P450 monoogenases such as avnA and cypX might perform these steps in addition to previously proposed steps. The chain is Versicolorin B synthase from Dothistroma septosporum (Red band needle blight fungus).